The chain runs to 669 residues: Acyl-coenzyme A oxidase 1 (669 aa).

Residues threonine 152 and glycine 191 each coordinate FAD. Glutamate 434 (proton acceptor) is an active-site residue. Tyrosine 544 is subject to Phosphotyrosine. A Phosphoserine modification is found at serine 551. The Microbody targeting signal signature appears at 667–669 (AHL).

It belongs to the acyl-CoA oxidase family. Homodimer. FAD is required as a cofactor. In terms of tissue distribution, expressed in glia.

It localises to the peroxisome. The protein localises to the nucleus. The catalysed reaction is a 2,3-saturated acyl-CoA + O2 = a (2E)-enoyl-CoA + H2O2. It functions in the pathway lipid metabolism; peroxisomal fatty acid beta-oxidation. Catalyzes the desaturation of acyl-CoAs to 2-trans-enoyl-CoAs. First enzyme of the fatty acid beta-oxidation pathway. In Drosophila melanogaster (Fruit fly), this protein is Acyl-coenzyme A oxidase 1.